The primary structure comprises 163 residues: Aspartate 1-decarboxylase (163 aa).

Residue S25 is the Schiff-base intermediate with substrate; via pyruvic acid of the active site. Pyruvic acid (Ser) is present on S25. T57 serves as a coordination point for substrate. Y58 acts as the Proton donor in catalysis. 73 to 75 (GAA) provides a ligand contact to substrate.

Belongs to the PanD family. In terms of assembly, heterooctamer of four alpha and four beta subunits. The cofactor is pyruvate. Post-translationally, is synthesized initially as an inactive proenzyme, which is activated by self-cleavage at a specific serine bond to produce a beta-subunit with a hydroxyl group at its C-terminus and an alpha-subunit with a pyruvoyl group at its N-terminus.

It localises to the cytoplasm. It carries out the reaction L-aspartate + H(+) = beta-alanine + CO2. It participates in cofactor biosynthesis; (R)-pantothenate biosynthesis; beta-alanine from L-aspartate: step 1/1. In terms of biological role, catalyzes the pyruvoyl-dependent decarboxylation of aspartate to produce beta-alanine. The protein is Aspartate 1-decarboxylase of Saccharopolyspora erythraea (strain ATCC 11635 / DSM 40517 / JCM 4748 / NBRC 13426 / NCIMB 8594 / NRRL 2338).